The sequence spans 468 residues: N-acetyltransferase SLI1 (468 aa).

It is found in the endoplasmic reticulum. In terms of biological role, confers resistance to the sphingolipid biosynthesis inhibitor drug myriocin (ISP-1). Inactivates ISP-1 by converting it into N-acetyl-myriocin. Cooperates with YPK1 in mediating resistance to myriocin. In Saccharomyces cerevisiae (strain ATCC 204508 / S288c) (Baker's yeast), this protein is N-acetyltransferase SLI1 (SLI1).